Reading from the N-terminus, the 146-residue chain is D-aminoacyl-tRNA deacylase (146 aa).

The Gly-cisPro motif, important for rejection of L-amino acids signature appears at 137 to 138; sequence GP.

The protein belongs to the DTD family. Homodimer.

It localises to the cytoplasm. It carries out the reaction glycyl-tRNA(Ala) + H2O = tRNA(Ala) + glycine + H(+). The enzyme catalyses a D-aminoacyl-tRNA + H2O = a tRNA + a D-alpha-amino acid + H(+). Functionally, an aminoacyl-tRNA editing enzyme that deacylates mischarged D-aminoacyl-tRNAs. Also deacylates mischarged glycyl-tRNA(Ala), protecting cells against glycine mischarging by AlaRS. Acts via tRNA-based rather than protein-based catalysis; rejects L-amino acids rather than detecting D-amino acids in the active site. By recycling D-aminoacyl-tRNA to D-amino acids and free tRNA molecules, this enzyme counteracts the toxicity associated with the formation of D-aminoacyl-tRNA entities in vivo and helps enforce protein L-homochirality. In Bacillus mycoides (strain KBAB4) (Bacillus weihenstephanensis), this protein is D-aminoacyl-tRNA deacylase.